The sequence spans 1855 residues: Unconventional myosin-Va (1855 aa).

Ala-2 carries the N-acetylalanine modification. The Myosin N-terminal SH3-like domain maps to 8 to 60 (TKFARVWIPDPEEVWKSAELLKDYKPGDKVLLLHLEEGKDLEYHLDPKTKELP). Positions 69–763 (VGENDLTALS…QVAYLEKLRA (695 aa)) constitute a Myosin motor domain. Residue 163 to 170 (GESGAGKT) participates in ATP binding. The tract at residues 598-631 (AISPTSATSSGRTPLTRTPAKPTKGRPGQMAKEH) is disordered. Ser-600 carries the phosphoserine modification. The segment covering 600–613 (SPTSATSSGRTPLT) has biased composition (polar residues). Positions 643–665 (LHLLMETLNATTPHYVRCIKPND) are actin-binding. 6 consecutive IQ domains span residues 766-788 (LRAA…KYLR), 789-818 (MRKA…TKAA), 814-836 (RTKA…RYKI), 837-861 (RRAA…RKIL), 862-883 (REHK…THYK), and 885-914 (SMHA…EARS). 2 coiled-coil regions span residues 914-1237 (SVER…APEV) and 1338-1445 (VYEG…ELEV). The residue at position 1032 (Thr-1032) is a Phosphothreonine. Phosphoserine is present on residues Ser-1452 and Ser-1652. Positions 1534–1810 (TSTINSIKKV…IRTIQMRLRD (277 aa)) constitute a Dilute domain. Thr-1760 carries the phosphothreonine modification.

The protein belongs to the TRAFAC class myosin-kinesin ATPase superfamily. Myosin family. May be a homodimer, which associates with multiple calmodulin or myosin light chains. Interacts with RIPL2, the interaction is required for its role in dendrite formation. Interacts with MLPH. Interacts with SYTL4. Interacts with MYRIP. Interacts with RAB10; mediates the transport to the plasma membrane of SLC2A4/GLUT4 storage vesicles. Interacts with FMR1; this interaction occurs in association with polyribosome. Detected in melanocytes.

It carries out the reaction ATP + H2O = ADP + phosphate + H(+). Its function is as follows. Processive actin-based motor that can move in large steps approximating the 36-nm pseudo-repeat of the actin filament. Can hydrolyze ATP in the presence of actin, which is essential for its function as a motor protein. Involved in melanosome transport. Also mediates the transport of vesicles to the plasma membrane. May also be required for some polarization process involved in dendrite formation. The chain is Unconventional myosin-Va (MYO5A) from Homo sapiens (Human).